The following is a 370-amino-acid chain: Queuine tRNA-ribosyltransferase (370 aa).

The active-site Proton acceptor is Asp-89. Substrate is bound by residues 89-93, Asp-143, Gln-185, and Gly-212; that span reads DSGGF. An RNA binding region spans residues 243 to 249; it reads GVGTPED. The active-site Nucleophile is the Asp-262. The RNA binding; important for wobble base 34 recognition stretch occupies residues 267–271; the sequence is TRNAR. The Zn(2+) site is built by Cys-300, Cys-302, Cys-305, and His-331.

The protein belongs to the queuine tRNA-ribosyltransferase family. Homodimer. Within each dimer, one monomer is responsible for RNA recognition and catalysis, while the other monomer binds to the replacement base PreQ1. Requires Zn(2+) as cofactor.

The enzyme catalyses 7-aminomethyl-7-carbaguanine + guanosine(34) in tRNA = 7-aminomethyl-7-carbaguanosine(34) in tRNA + guanine. The protein operates within tRNA modification; tRNA-queuosine biosynthesis. Catalyzes the base-exchange of a guanine (G) residue with the queuine precursor 7-aminomethyl-7-deazaguanine (PreQ1) at position 34 (anticodon wobble position) in tRNAs with GU(N) anticodons (tRNA-Asp, -Asn, -His and -Tyr). Catalysis occurs through a double-displacement mechanism. The nucleophile active site attacks the C1' of nucleotide 34 to detach the guanine base from the RNA, forming a covalent enzyme-RNA intermediate. The proton acceptor active site deprotonates the incoming PreQ1, allowing a nucleophilic attack on the C1' of the ribose to form the product. After dissociation, two additional enzymatic reactions on the tRNA convert PreQ1 to queuine (Q), resulting in the hypermodified nucleoside queuosine (7-(((4,5-cis-dihydroxy-2-cyclopenten-1-yl)amino)methyl)-7-deazaguanosine). This chain is Queuine tRNA-ribosyltransferase, found in Methylobacillus flagellatus (strain ATCC 51484 / DSM 6875 / VKM B-1610 / KT).